The sequence spans 837 residues: Semaphorin-4G (837 aa).

An N-terminal signal peptide occupies residues 1–17 (MWGRLWPLLFSFLTVTA). Residues 18 to 673 (VPGPSLRRPS…GAQLAHDMRM (656 aa)) are Extracellular-facing. Residues 35 to 503 (RLTISYEELS…AASGVLQFPL (469 aa)) form the Sema domain. 3 N-linked (GlcNAc...) asparagine glycosylation sites follow: Asn55, Asn111, and Asn126. A disulfide bond links Cys104 and Cys115. 3 cysteine pairs are disulfide-bonded: Cys133–Cys142, Cys268–Cys375, and Cys292–Cys335. N-linked (GlcNAc...) asparagine glycosylation is present at Asn386. Residues 505-556 (SCSRYQSCYDCILARDPYCGWDSSIHACMVATTVANRTELIQDIERGNRGCE) enclose the PSI domain. Intrachain disulfides connect Cys506/Cys523 and Cys515/Cys532. Asn540 and Asn596 each carry an N-linked (GlcNAc...) asparagine glycan. In terms of domain architecture, Ig-like C2-type spans 565–647 (PPLKTRSVLR…RMLLASYSLT (83 aa)). Cys582 and Cys630 are oxidised to a cystine. The chain crosses the membrane as a helical span at residues 674 to 694 (FYVVAIAILGGLCLILASSLL). Over 695 to 837 (YVACLKGGRR…LVEQLDESSV (143 aa)) the chain is Cytoplasmic. The disordered stretch occupies residues 721-776 (SAVQLQTVSGQCPGEEDEGDDGEGTGGLESGCLQIIPGEGAPAPPPPPPPPPPAEL). Residues 734–743 (GEEDEGDDGE) show a composition bias toward acidic residues. The span at 762–774 (PAPPPPPPPPPPA) shows a compositional bias: pro residues. A phosphoserine mark is found at Ser794 and Ser836.

This sequence belongs to the semaphorin family. As to quaternary structure, interacts with PLXNB2. As to expression, brain, spinal cord, and several sensory organs as well as specific populations of projection neurons.

The protein resides in the cell membrane. Its function is as follows. Cell surface receptor for PLXNB2. May play a role in axon guidance. The protein is Semaphorin-4G (Sema4g) of Mus musculus (Mouse).